We begin with the raw amino-acid sequence, 264 residues long: Small ribosomal subunit protein eS4 (264 aa).

The 63-residue stretch at 42-104 folds into the S4 RNA-binding domain; it reads LPLVIIMRNR…TNENFRLLYD (63 aa).

Belongs to the eukaryotic ribosomal protein eS4 family.

It is found in the cytoplasm. In Solanum tuberosum (Potato), this protein is Small ribosomal subunit protein eS4 (RPS4).